The sequence spans 397 residues: GTPase Obg (397 aa).

In terms of domain architecture, Obg spans Met-1–Leu-159. The disordered stretch occupies residues Thr-128–Glu-148. A compositionally biased stretch (polar residues) spans Arg-129–Gly-144. Residues Ala-160–Glu-333 enclose the OBG-type G domain. GTP contacts are provided by residues Gly-166–Ser-173, Phe-191–Val-195, Asp-213–Gly-216, Asn-283–Asp-286, and Ser-314–Leu-316. Ser-173 and Thr-193 together coordinate Mg(2+). The segment covering Ala-336 to Glu-347 has biased composition (acidic residues). Residues Ala-336–Glu-397 form a disordered region. The span at Glu-349–Ala-370 shows a compositional bias: basic and acidic residues. Positions Asp-378–Val-390 are enriched in acidic residues.

This sequence belongs to the TRAFAC class OBG-HflX-like GTPase superfamily. OBG GTPase family. Monomer. Requires Mg(2+) as cofactor.

Its subcellular location is the cytoplasm. An essential GTPase which binds GTP, GDP and possibly (p)ppGpp with moderate affinity, with high nucleotide exchange rates and a fairly low GTP hydrolysis rate. Plays a role in control of the cell cycle, stress response, ribosome biogenesis and in those bacteria that undergo differentiation, in morphogenesis control. The sequence is that of GTPase Obg from Marinobacter nauticus (strain ATCC 700491 / DSM 11845 / VT8) (Marinobacter aquaeolei).